Here is a 160-residue protein sequence, read N- to C-terminus: Transcription elongation factor GreB (160 aa).

It belongs to the GreA/GreB family. GreB subfamily.

Its function is as follows. Necessary for efficient RNA polymerase transcription elongation past template-encoded arresting sites. The arresting sites in DNA have the property of trapping a certain fraction of elongating RNA polymerases that pass through, resulting in locked ternary complexes. Cleavage of the nascent transcript by cleavage factors such as GreA or GreB allows the resumption of elongation from the new 3'terminus. GreB releases sequences of up to 9 nucleotides in length. The sequence is that of Transcription elongation factor GreB from Vibrio vulnificus (strain YJ016).